A 438-amino-acid polypeptide reads, in one-letter code: Aflatoxin cluster transcriptional coactivator aflS (438 aa).

One can recognise an HTH iclR-type domain in the interval 65-134 (LALYNQLLAC…PSPGHVAHSV (70 aa)). Positions 95-114 (FEDVADIAGVPECRLRRLVR) form a DNA-binding region, H-T-H motif.

As to quaternary structure, interacts with aflR.

Its subcellular location is the nucleus. It is found in the endosome. Functionally, transcription coactivator involved in regulation of the aflatoxin biosynthesis gene cluster with aflR. The ratio of the expression data between aflS:aflR plays a crucial role in the regulation of aflatoxins production. A high ratio, produced at a range between 17 and 30 degrees Celsius, corresponds with the production profile of aflatoxin G1 biosynthesis. A low ratio, produced over 30 degrees Celsius, is related to aflatoxin B1 biosynthesis. AflJ may act in aflR transport to or from the nucleus, thus controlling the availability of aflR for transcriptional activation of aflatoxin biosynthesis cluster genes. AflJ may also assist in directing endosomes to the cytoplasmic membrane for aflatoxin export. The protein is Aflatoxin cluster transcriptional coactivator aflS of Aspergillus parasiticus (strain ATCC 56775 / NRRL 5862 / SRRC 143 / SU-1).